The primary structure comprises 121 residues: Large ribosomal subunit protein bL19 (121 aa).

The protein belongs to the bacterial ribosomal protein bL19 family.

Its function is as follows. This protein is located at the 30S-50S ribosomal subunit interface and may play a role in the structure and function of the aminoacyl-tRNA binding site. This is Large ribosomal subunit protein bL19 from Chlamydia trachomatis serovar L2 (strain ATCC VR-902B / DSM 19102 / 434/Bu).